Reading from the N-terminus, the 246-residue chain is ATP synthase subunit a, chloroplastic (246 aa).

The next 5 membrane-spanning stretches (helical) occupy residues 35–55 (GQVLLTSWFVLGTVILFGLIA), 94–114 (VPFIGTIFIFVLVSNWSGALL), 132–152 (DINTTVALALLTSISYFYAGI), 198–218 (LVVGVLVALVPLIVPIPVMLL), and 219–239 (GVFTSAIQALVFATLAGAYIG).

This sequence belongs to the ATPase A chain family. In terms of assembly, F-type ATPases have 2 components, CF(1) - the catalytic core - and CF(0) - the membrane proton channel. CF(1) has five subunits: alpha(3), beta(3), gamma(1), delta(1), epsilon(1). CF(0) has four main subunits: a, b, b' and c.

The protein localises to the plastid. Its subcellular location is the chloroplast thylakoid membrane. Key component of the proton channel; it plays a direct role in the translocation of protons across the membrane. The sequence is that of ATP synthase subunit a, chloroplastic from Stigeoclonium helveticum (Green alga).